A 462-amino-acid chain; its full sequence is MLDFAIFAVTFLLALVGAVLYLYPASRQAAGIPGITPTEEKDGNLPDIVNSGSLHEFLVNLHERYGPVVSFWFGRRLVVSLGTVDVLKQHINPNKTLDPFETMLKSLLRYQSDSGNVSENHMRKKLYENGVTNCLRSNFALLIKLSEELLDKWLSYPESQHVPLCQHMLGFAMKSVTQMVMGSTFEDEQEVIRFQKNHGTVWSEIGKGFLDGSLDKSTTRKKQYEDALMQLESILKKIIKERKGRNFSQHIFIDSLVQGNLNDQQILEDTMIFSLASCMITAKLCTWAVCFLTTYEEIQKKLYEEIDQVLGKGPITSEKIEELRYCRQVLCETVRTAKLTPVSARLQDIEGKIDKFIIPRETLVLYALGVVLQDPGTWSSPYKFDPERFDDESVMKTFSLLGFSGTRECPELRFAYMVTAVLLSVLLRRLHLLSVEGQVIETKYELVTSSKEEAWITVSKRY.

The helical transmembrane segment at phenylalanine 4–proline 24 threads the bilayer. Cysteine 409 is a binding site for heme.

Belongs to the cytochrome P450 family. It depends on heme as a cofactor.

It localises to the membrane. This Bos taurus (Bovine) protein is Cytochrome P450 20A1 (CYP20A1).